Reading from the N-terminus, the 82-residue chain is Cytochrome b559 subunit alpha (82 aa).

Residues Ile-22 to Phe-36 form a helical membrane-spanning segment. Residue His-24 participates in heme binding.

The protein belongs to the PsbE/PsbF family. As to quaternary structure, heterodimer of an alpha subunit and a beta subunit. PSII is composed of 1 copy each of membrane proteins PsbA, PsbB, PsbC, PsbD, PsbE, PsbF, PsbH, PsbI, PsbJ, PsbK, PsbL, PsbM, PsbT, PsbX, PsbY, Psb30/Ycf12, peripheral proteins PsbO, CyanoQ (PsbQ), PsbU, PsbV and a large number of cofactors. It forms dimeric complexes. It depends on heme b as a cofactor.

Its subcellular location is the cellular thylakoid membrane. In terms of biological role, this b-type cytochrome is tightly associated with the reaction center of photosystem II (PSII). PSII is a light-driven water:plastoquinone oxidoreductase that uses light energy to abstract electrons from H(2)O, generating O(2) and a proton gradient subsequently used for ATP formation. It consists of a core antenna complex that captures photons, and an electron transfer chain that converts photonic excitation into a charge separation. The polypeptide is Cytochrome b559 subunit alpha (Prochlorococcus marinus (strain SARG / CCMP1375 / SS120)).